The following is a 284-amino-acid chain: Tropomyosin (284 aa).

Residues 1–273 (MEAIKKKMQA…KEKYKSISDE (273 aa)) adopt a coiled-coil conformation.

Belongs to the tropomyosin family. In terms of assembly, homodimer. In terms of tissue distribution, ubiquitous, but especially prevalent in the anterior muscle bundles associated with legs. Expression in the mid and posterior regions is probably related to the numerous, small muscle bundles associated with the digestive and reproductive systems (at protein level).

Tropomyosin, in association with the troponin complex, plays a central role in the calcium dependent regulation of muscle contraction. The sequence is that of Tropomyosin from Psoroptes ovis (Sheep scab mite).